A 183-amino-acid polypeptide reads, in one-letter code: MSRLRIYTESGELIKDITDPKEIAEELQKINVLFERWRANAPLKENASDEEIINAYKHEIDRLINKYGFQSYDVIAMTPEHPKKDELRQKFLKEHTHSDFEVRYFVYGDGVFYLHPNDKVYILHCTAGDLISVPPNTKHWFDMGENPNFKCIRLFTTPEGWVAEYTGSDIAEKFPKYEEVVNG.

Residues H95, H97, E101, and H139 each coordinate Fe(2+). 4 residues coordinate Ni(2+): H95, H97, E101, and H139.

The protein belongs to the acireductone dioxygenase (ARD) family. Monomer. It depends on Fe(2+) as a cofactor. Ni(2+) serves as cofactor.

It catalyses the reaction 1,2-dihydroxy-5-(methylsulfanyl)pent-1-en-3-one + O2 = 3-(methylsulfanyl)propanoate + CO + formate + 2 H(+). The catalysed reaction is 1,2-dihydroxy-5-(methylsulfanyl)pent-1-en-3-one + O2 = 4-methylsulfanyl-2-oxobutanoate + formate + 2 H(+). It participates in amino-acid biosynthesis; L-methionine biosynthesis via salvage pathway; L-methionine from S-methyl-5-thio-alpha-D-ribose 1-phosphate: step 5/6. In terms of biological role, catalyzes 2 different reactions between oxygen and the acireductone 1,2-dihydroxy-3-keto-5-methylthiopentene (DHK-MTPene) depending upon the metal bound in the active site. Fe-containing acireductone dioxygenase (Fe-ARD) produces formate and 2-keto-4-methylthiobutyrate (KMTB), the alpha-ketoacid precursor of methionine in the methionine recycle pathway. Ni-containing acireductone dioxygenase (Ni-ARD) produces methylthiopropionate, carbon monoxide and formate, and does not lie on the methionine recycle pathway. The chain is Acireductone dioxygenase from Aquifex aeolicus (strain VF5).